Consider the following 66-residue polypeptide: Surface composition regulator (66 aa).

This sequence belongs to the GlgS family.

Major determinant of cell surface composition. Negatively regulates motility, adhesion and synthesis of biofilm exopolysaccharides. This chain is Surface composition regulator, found in Escherichia coli O127:H6 (strain E2348/69 / EPEC).